The primary structure comprises 317 residues: Serpentine receptor class delta-44 (317 aa).

6 consecutive transmembrane segments (helical) span residues 5–25 (ILSVLNPTVFVLSLCFQIILI), 90–110 (MFHILQTSSLVSGLTVFLTTF), 130–150 (ILFISSIVLISAGCGILLVII), 185–205 (RVNGIIINGLVVIVPITCLLL), 235–255 (IFGHTLVYVPIFICSTISLIT), and 264–284 (FFIFVLPHLTTVIDPLLTMYF).

Belongs to the nematode receptor-like protein srd family.

Its subcellular location is the membrane. This chain is Serpentine receptor class delta-44 (srd-44), found in Caenorhabditis elegans.